The primary structure comprises 326 residues: ATP synthase gamma chain (326 aa).

Belongs to the ATPase gamma chain family. As to quaternary structure, F-type ATPases have 2 components, CF(1) - the catalytic core - and CF(0) - the membrane proton channel. CF(1) has five subunits: alpha(3), beta(3), gamma(1), delta(1), epsilon(1). CF(0) has three main subunits: a, b and c.

Its subcellular location is the cell membrane. In terms of biological role, produces ATP from ADP in the presence of a proton gradient across the membrane. The gamma chain is believed to be important in regulating ATPase activity and the flow of protons through the CF(0) complex. The polypeptide is ATP synthase gamma chain (Rhodococcus jostii (strain RHA1)).